Reading from the N-terminus, the 37-residue chain is M-oxotoxin-Ot2d (37 aa).

Expressed by the venom gland.

It is found in the secreted. Functionally, disrupts biological membranes, particularly those rich in phosphocholine. Has antimicrobial activity against Gram-negative bacterium E.coli, Gram-positive bacteria B.subtilis and S.aureus, and hemolytic activity against sheep, pig and guinea pig red blood cells. Has insecticidal activity against S.frugiperda ovarian cells by opening non-selective ion channels. Enhances the insecticidal activity of spider venom neurotoxic peptides. This Oxyopes takobius (Lynx spider) protein is M-oxotoxin-Ot2d.